We begin with the raw amino-acid sequence, 257 residues long: tRNA pseudouridine synthase A (257 aa).

Aspartate 53 serves as the catalytic Nucleophile. Tyrosine 111 provides a ligand contact to substrate.

The protein belongs to the tRNA pseudouridine synthase TruA family. As to quaternary structure, homodimer.

The catalysed reaction is uridine(38/39/40) in tRNA = pseudouridine(38/39/40) in tRNA. Formation of pseudouridine at positions 38, 39 and 40 in the anticodon stem and loop of transfer RNAs. The sequence is that of tRNA pseudouridine synthase A from Xanthomonas axonopodis pv. citri (strain 306).